Here is a 500-residue protein sequence, read N- to C-terminus: Enolase (500 aa).

Substrate-binding residues include H225 and E234. The Proton donor role is filled by E277. Residues D312, E361, and D386 each contribute to the Mg(2+) site. The substrate site is built by E361 and D386. K411 functions as the Proton acceptor in the catalytic mechanism. Substrate contacts are provided by residues 438-441 (SHRS) and K462.

The protein belongs to the enolase family. Homodimer. Mg(2+) serves as cofactor.

The protein localises to the cytoplasm. It catalyses the reaction (2R)-2-phosphoglycerate = phosphoenolpyruvate + H2O. Its pathway is carbohydrate degradation; glycolysis; pyruvate from D-glyceraldehyde 3-phosphate: step 4/5. Enzyme of the glycolytic pathway. Glycolysis is essential in glial cells but not in neurons; neurons rely on the citric acid cycle for their energy needs, and on lactate and alanine secreted into the hemolymph by glial cells to fuel it. In Drosophila melanogaster (Fruit fly), this protein is Enolase.